The chain runs to 336 residues: Mitochondrial amidoxime reducing component 2 (336 aa).

The N-terminal 35 residues, 1–35 (MGAAGSSALARLGLPALPGPRWLGVAALGLAAVAL), are a transit peptide targeting the mitochondrion. Residues K138, K144, K173, K187, K287, and K294 each participate in a glycyl lysine isopeptide (Lys-Gly) (interchain with G-Cter in ubiquitin) cross-link. Residues 188 to 334 (ARASNEIFPS…LKVGDPVYQM (147 aa)) enclose the MOSC domain.

As to quaternary structure, component of a complex composed of cytochrome b5, NADH-cytochrome b5 reductase (CYB5R3) and MTARC2. It depends on Mo-molybdopterin as a cofactor. Post-translationally, ubiquitinated by PRKN during mitophagy, leading to its degradation and enhancement of mitophagy. Deubiquitinated by USP30.

Its subcellular location is the mitochondrion outer membrane. It localises to the peroxisome. The enzyme catalyses N(omega)-hydroxy-L-arginine + 2 Fe(II)-[cytochrome b5] + 2 H(+) = L-arginine + 2 Fe(III)-[cytochrome b5] + H2O. Its function is as follows. Catalyzes the reduction of N-oxygenated molecules, acting as a counterpart of cytochrome P450 and flavin-containing monooxygenases in metabolic cycles. As a component of prodrug-converting system, reduces a multitude of N-hydroxylated prodrugs particularly amidoximes, leading to increased drug bioavailability. May be involved in mitochondrial N(omega)-hydroxy-L-arginine (NOHA) reduction, regulating endogenous nitric oxide levels and biosynthesis. Postulated to cleave the N-OH bond of N-hydroxylated substrates in concert with electron transfer from NADH to cytochrome b5 reductase then to cytochrome b5, the ultimate electron donor that primes the active site for substrate reduction. The sequence is that of Mitochondrial amidoxime reducing component 2 (MTARC2) from Bos taurus (Bovine).